A 191-amino-acid polypeptide reads, in one-letter code: uncharacterized protein (191 aa).

The signal sequence occupies residues 1 to 17 (MESIILSIAIFIGVLLG). Residues 82 to 148 (TFSGSRTSPD…DVGAGSGSSI (67 aa)) form a disordered region. A helical membrane pass occupies residues 168–188 (VAVLITAAILSAPVTAIALLE).

Its subcellular location is the membrane. This is an uncharacterized protein from Saccharomyces cerevisiae (strain ATCC 204508 / S288c) (Baker's yeast).